The sequence spans 296 residues: ATP-dependent ribose-1-phosphate kinase (296 aa).

The active-site Proton acceptor is D242.

This sequence belongs to the carbohydrate kinase PfkB family. The cofactor is Mg(2+).

It carries out the reaction alpha-D-ribose 1-phosphate + ATP = alpha-D-ribose 1,5-bisphosphate + ADP + H(+). Requires salt for kinase activity. 2.0 M is the optimal KCl concentration. In terms of biological role, kinase involved in the non-carboxylating pentose bisphosphate pathway, a nucleoside degradation pathway present in some halophilic archaea. Catalyzes the ATP-dependent phosphorylation of ribose 1-phosphate (R1P) to ribose 1,5-bisphosphate (R15P). Shows weak activity towards various other phosphate acceptors, such as xylulose, 2'-deoxyguanosine and D-ribulose. ATP is the most preferred phosphate donor, followed by CTP and GTP. The protein is ATP-dependent ribose-1-phosphate kinase of Halopiger xanaduensis (strain DSM 18323 / JCM 14033 / SH-6).